The sequence spans 695 residues: UvrABC system protein C (695 aa).

Over residues 1–10 the composition is skewed to basic and acidic residues; it reads MNHDPAETRD. The interval 1–44 is disordered; the sequence is MNHDPAETRDTAAAPLADTESPSPVSPELTPHPAPAAQDIDTAT. A GIY-YIG domain is found at 88-166; the sequence is TSPGVYRMLN…IKQLRPRFNV (79 aa). The region spanning 276–311 is the UVR domain; the sequence is RAVKQELAVEMEKASNELEFETAALYRDRLAALSAI.

It belongs to the UvrC family. As to quaternary structure, interacts with UvrB in an incision complex.

It is found in the cytoplasm. In terms of biological role, the UvrABC repair system catalyzes the recognition and processing of DNA lesions. UvrC both incises the 5' and 3' sides of the lesion. The N-terminal half is responsible for the 3' incision and the C-terminal half is responsible for the 5' incision. In Rhodopseudomonas palustris (strain HaA2), this protein is UvrABC system protein C.